A 227-amino-acid polypeptide reads, in one-letter code: tRNA (guanine-N(1)-)-methyltransferase (227 aa).

S-adenosyl-L-methionine is bound by residues Gly112 and 132-137; that span reads IGDFIL.

It belongs to the RNA methyltransferase TrmD family. As to quaternary structure, homodimer.

The protein localises to the cytoplasm. The catalysed reaction is guanosine(37) in tRNA + S-adenosyl-L-methionine = N(1)-methylguanosine(37) in tRNA + S-adenosyl-L-homocysteine + H(+). Specifically methylates guanosine-37 in various tRNAs. The sequence is that of tRNA (guanine-N(1)-)-methyltransferase from Sulfurovum sp. (strain NBC37-1).